The sequence spans 142 residues: Hemoglobin subunit alpha 1 (142 aa).

Serine 1 is modified (N-acetylserine). A Globin domain is found at 1 to 142 (SLSDKDKAAV…VSLALSERYR (142 aa)). Histidine 59 contacts O2. Position 88 (histidine 88) interacts with heme b.

This sequence belongs to the globin family. As to quaternary structure, hb1 is a heterotetramer of two alpha-1 chains and two beta-1 chains. Hb2 is a heterotetramer of two alpha-2 chains and two beta-1 chains. HbC is a heterotetramer of two alpha-1 chains and two beta-2 chains. As to expression, red blood cells.

Functionally, involved in oxygen transport from gills to the various peripheral tissues. The sequence is that of Hemoglobin subunit alpha 1 from Eleginops maclovinus (Patagonian blennie).